Reading from the N-terminus, the 293-residue chain is ATP synthase gamma chain (293 aa).

The protein belongs to the ATPase gamma chain family. F-type ATPases have 2 components, CF(1) - the catalytic core - and CF(0) - the membrane proton channel. CF(1) has five subunits: alpha(3), beta(3), gamma(1), delta(1), epsilon(1). CF(0) has three main subunits: a, b and c.

It is found in the cell membrane. Its function is as follows. Produces ATP from ADP in the presence of a proton gradient across the membrane. The gamma chain is believed to be important in regulating ATPase activity and the flow of protons through the CF(0) complex. This Methylacidiphilum infernorum (isolate V4) (Methylokorus infernorum (strain V4)) protein is ATP synthase gamma chain.